We begin with the raw amino-acid sequence, 510 residues long: NAD(P)H-quinone oxidoreductase subunit 2 B, chloroplastic (510 aa).

A run of 14 helical transmembrane segments spans residues Phe31 to Thr51, Trp59 to Trp79, Ile99 to Ile119, Met124 to Cys144, Leu149 to Tyr169, Leu184 to Leu204, Ile229 to Phe249, Pro261 to Thr281, Trp295 to Ile315, Met323 to Asp343, Tyr354 to Leu374, Ala395 to Phe415, Leu418 to Leu438, and Met484 to Ile504.

Belongs to the complex I subunit 2 family. NDH is composed of at least 16 different subunits, 5 of which are encoded in the nucleus.

Its subcellular location is the plastid. It is found in the chloroplast thylakoid membrane. The enzyme catalyses a plastoquinone + NADH + (n+1) H(+)(in) = a plastoquinol + NAD(+) + n H(+)(out). It carries out the reaction a plastoquinone + NADPH + (n+1) H(+)(in) = a plastoquinol + NADP(+) + n H(+)(out). Functionally, NDH shuttles electrons from NAD(P)H:plastoquinone, via FMN and iron-sulfur (Fe-S) centers, to quinones in the photosynthetic chain and possibly in a chloroplast respiratory chain. The immediate electron acceptor for the enzyme in this species is believed to be plastoquinone. Couples the redox reaction to proton translocation, and thus conserves the redox energy in a proton gradient. This Hordeum vulgare (Barley) protein is NAD(P)H-quinone oxidoreductase subunit 2 B, chloroplastic.